The following is a 264-amino-acid chain: Major prion protein 1 (264 aa).

An N-terminal signal peptide occupies residues 1–24 (MVKSHIGSWILVLFVAMWSDVALC). An interaction with GRB2, ERI3 and SYN1 region spans residues 25–241 (KKRPKPGGGW…ESEAYYQRGA (217 aa)). The tract at residues 28–118 (PKPGGGWNTG…QWNKPSKPKT (91 aa)) is disordered. Repeat copies occupy residues 54–62 (SQGGGGWGQ), 63–70 (PHGGGWGQ), 71–78 (PHGGGWGQ), 79–86 (PHGGGWGQ), 87–94 (PHGGGWGQ), and 95–103 (PHGGGGWGQ). The 6 X 8 AA tandem repeats of P-H-G-G-G-W-G-Q stretch occupies residues 54-103 (SQGGGGWGQPHGGGWGQPHGGGWGQPHGGGWGQPHGGGWGQPHGGGGWGQ). Gly residues predominate over residues 55–107 (QGGGGWGQPHGGGWGQPHGGGWGQPHGGGWGQPHGGGWGQPHGGGGWGQGGTH). Residues His-72, Gly-73, Gly-74, His-80, Gly-81, Gly-82, His-88, Gly-89, Gly-90, His-96, Gly-98, and Gly-99 each coordinate Cu(2+). A disulfide bridge links Cys-190 with Cys-225. Residues Asn-192 and Asn-208 are each glycosylated (N-linked (GlcNAc...) asparagine). Residue Ala-241 is the site of GPI-anchor amidated alanine attachment. Positions 242-264 (SVILFSSPPVILLISFLIFLIVG) are cleaved as a propeptide — removed in mature form.

This sequence belongs to the prion family. As to quaternary structure, monomer and homodimer. Has a tendency to aggregate into amyloid fibrils containing a cross-beta spine, formed by a steric zipper of superposed beta-strands. Soluble oligomers may represent an intermediate stage on the path to fibril formation. Copper binding may promote oligomerization. Interacts with GRB2, APP, ERI3/PRNPIP and SYN1. Mislocalized cytosolically exposed PrP interacts with MGRN1; this interaction alters MGRN1 subcellular location and causes lysosomal enlargement. Interacts with KIAA1191.

The protein localises to the cell membrane. It localises to the golgi apparatus. Functionally, its primary physiological function is unclear. Has cytoprotective activity against internal or environmental stresses. May play a role in neuronal development and synaptic plasticity. May be required for neuronal myelin sheath maintenance. May play a role in iron uptake and iron homeostasis. Soluble oligomers are toxic to cultured neuroblastoma cells and induce apoptosis (in vitro). Association with GPC1 (via its heparan sulfate chains) targets PRNP to lipid rafts. Also provides Cu(2+) or Zn(2+) for the ascorbate-mediated GPC1 deaminase degradation of its heparan sulfate side chains. This is Major prion protein 1 from Tragelaphus strepsiceros (Greater kudu).